The primary structure comprises 267 residues: 3-methyl-2-oxobutanoate hydroxymethyltransferase (267 aa).

Residues D45 and D84 each contribute to the Mg(2+) site. 3-methyl-2-oxobutanoate-binding positions include 45–46 (DS), D84, and K113. Mg(2+) is bound at residue E115. E182 acts as the Proton acceptor in catalysis.

Belongs to the PanB family. In terms of assembly, homodecamer; pentamer of dimers. Mg(2+) is required as a cofactor.

It is found in the cytoplasm. The catalysed reaction is 3-methyl-2-oxobutanoate + (6R)-5,10-methylene-5,6,7,8-tetrahydrofolate + H2O = 2-dehydropantoate + (6S)-5,6,7,8-tetrahydrofolate. It participates in cofactor biosynthesis; coenzyme A biosynthesis. Catalyzes the reversible reaction in which hydroxymethyl group from 5,10-methylenetetrahydrofolate is transferred onto alpha-ketoisovalerate to form ketopantoate. This chain is 3-methyl-2-oxobutanoate hydroxymethyltransferase, found in Saccharolobus islandicus (strain M.16.27) (Sulfolobus islandicus).